The chain runs to 292 residues: Tumor necrosis factor receptor type 1-associated DEATH domain protein (292 aa).

A Nuclear export signal motif is present at residues 148-164; sequence LRDDEIAELDQQLQSQA. Residues 199 to 289 enclose the Death domain; sequence AAGDLQRFSN…SLAENILDIQ (91 aa). The Nuclear localization signal signature appears at 215-228; it reads RKVGRALGKNCRAL.

In terms of assembly, heterodimer with tnfrsf1a.

The protein localises to the nucleus. It is found in the cytoplasm. The protein resides in the cytoskeleton. Adapter molecule for tnfrsf1a that specifically associates with the cytoplasmic domain of activated tnfrsf1a mediating its interaction with fadd. The chain is Tumor necrosis factor receptor type 1-associated DEATH domain protein (tradd) from Oncorhynchus mykiss (Rainbow trout).